Here is a 714-residue protein sequence, read N- to C-terminus: ATP-dependent zinc metalloprotease FtsH (714 aa).

Residues 1 to 75 are Cytoplasmic-facing; that stretch reads MEKPRRLRPR…KNPMEPRQQQ (75 aa). Residues 76-96 traverse the membrane as a helical segment; that stretch reads FSLWYVLVTILAMLAIQTLFV. Over 97 to 188 the chain is Periplasmic; the sequence is SGHVETIPYS…FVGQPDNKWL (92 aa). The helical transmembrane segment at 189-209 threads the bilayer; the sequence is STILSWVVPAVIFFGIWSFLI. Topologically, residues 210-714 are cytoplasmic; it reads KRVGGAAGSM…GKPDQKTQGT (505 aa). 280 to 287 contacts ATP; sequence GAPGTGKT. His-502 provides a ligand contact to Zn(2+). The active site involves Glu-503. Residues His-506 and Asp-579 each contribute to the Zn(2+) site. Positions 688–714 are disordered; sequence PMPPPKPVANIEESTATGKPDQKTQGT. The segment covering 699–714 has biased composition (polar residues); the sequence is EESTATGKPDQKTQGT.

The protein in the central section; belongs to the AAA ATPase family. In the C-terminal section; belongs to the peptidase M41 family. Homohexamer. It depends on Zn(2+) as a cofactor.

Its subcellular location is the cell inner membrane. In terms of biological role, acts as a processive, ATP-dependent zinc metallopeptidase for both cytoplasmic and membrane proteins. Plays a role in the quality control of integral membrane proteins. The protein is ATP-dependent zinc metalloprotease FtsH of Ralstonia pickettii (strain 12J).